A 508-amino-acid chain; its full sequence is Hydroxymethylglutaryl-CoA synthase, mitochondrial (508 aa).

Residues 1 to 37 (MQRLLAPARRVLQVKRAMQETSLTPAHLLSAAQQRFS) constitute a mitochondrion transit peptide. Lys52 carries the post-translational modification N6-succinyllysine. (3S)-3-hydroxy-3-methylglutaryl-CoA contacts are provided by Glu80 and Ala81. Residues Lys83 and Lys118 each carry the N6-acetyllysine; alternate modification. N6-succinyllysine; alternate occurs at positions 83 and 118. The active-site Proton donor/acceptor is the Glu132. (3S)-3-hydroxy-3-methylglutaryl-CoA contacts are provided by Cys166, Asn204, and Thr208. The Acyl-thioester intermediate role is filled by Cys166. Lys221 carries the N6-succinyllysine modification. Residue Lys243 is modified to N6-acetyllysine. An N6-acetyllysine; alternate modification is found at Lys256. Lys256 carries the post-translational modification N6-succinyllysine; alternate. (3S)-3-hydroxy-3-methylglutaryl-CoA-binding residues include Ser258 and His301. Catalysis depends on His301, which acts as the Proton donor/acceptor. Lys306 is modified (N6-acetyllysine). Lys310 contributes to the (3S)-3-hydroxy-3-methylglutaryl-CoA binding site. N6-acetyllysine; alternate occurs at positions 310 and 327. Lys310 and Lys327 each carry N6-succinyllysine; alternate. Lys333 is modified (N6-succinyllysine). N6-acetyllysine; alternate occurs at positions 342, 350, 354, and 358. Residues Lys342, Lys350, Lys354, and Lys358 each carry the N6-succinyllysine; alternate modification. Residues Asn380 and Ser414 each contribute to the (3S)-3-hydroxy-3-methylglutaryl-CoA site. At Lys427 the chain carries N6-acetyllysine. Phosphoserine is present on Ser433. An N6-acetyllysine modification is found at Lys437. Ser440 is subject to Phosphoserine. The residue at position 447 (Lys447) is an N6-acetyllysine; alternate. Residue Lys447 is modified to N6-succinyllysine; alternate. Ser456 carries the phosphoserine modification. Lys473 carries the post-translational modification N6-acetyllysine; alternate. An N6-succinyllysine; alternate modification is found at Lys473. Ser477 is modified (phosphoserine).

It belongs to the thiolase-like superfamily. HMG-CoA synthase family. In terms of assembly, homodimer. Acetylation of Lys-427 is observed in liver mitochondria from fasted mice but not from fed mice. In terms of processing, succinylated. Desuccinylated by SIRT5. Succinylation, at least at Lys-83 and Lys-310, inhibits the enzymatic activity. Liver and kidney.

It localises to the mitochondrion. The enzyme catalyses acetoacetyl-CoA + acetyl-CoA + H2O = (3S)-3-hydroxy-3-methylglutaryl-CoA + CoA + H(+). It functions in the pathway metabolic intermediate biosynthesis; (R)-mevalonate biosynthesis; (R)-mevalonate from acetyl-CoA: step 2/3. In terms of biological role, catalyzes the first irreversible step in ketogenesis, condensing acetyl-CoA to acetoacetyl-CoA to form HMG-CoA, which is converted by HMG-CoA reductase (HMGCR) into mevalonate. The chain is Hydroxymethylglutaryl-CoA synthase, mitochondrial (Hmgcs2) from Mus musculus (Mouse).